A 174-amino-acid polypeptide reads, in one-letter code: Nicotinamide-nucleotide adenylyltransferase (174 aa).

It belongs to the archaeal NMN adenylyltransferase family.

Its subcellular location is the cytoplasm. It carries out the reaction beta-nicotinamide D-ribonucleotide + ATP + H(+) = diphosphate + NAD(+). It participates in cofactor biosynthesis; NAD(+) biosynthesis; NAD(+) from nicotinamide D-ribonucleotide: step 1/1. This chain is Nicotinamide-nucleotide adenylyltransferase, found in Methanospirillum hungatei JF-1 (strain ATCC 27890 / DSM 864 / NBRC 100397 / JF-1).